A 205-amino-acid polypeptide reads, in one-letter code: Large ribosomal subunit protein uL4 (205 aa).

The segment at 43-95 (RSGNRAQKDRAEVKHSTKKPWRQKGTGRARAGMTSSPLWRGGGRAFPNSPEEN) is disordered. Basic and acidic residues predominate over residues 48 to 57 (AQKDRAEVKH). Residues 58–69 (STKKPWRQKGTG) are compositionally biased toward basic residues.

It belongs to the universal ribosomal protein uL4 family. Part of the 50S ribosomal subunit.

Its function is as follows. One of the primary rRNA binding proteins, this protein initially binds near the 5'-end of the 23S rRNA. It is important during the early stages of 50S assembly. It makes multiple contacts with different domains of the 23S rRNA in the assembled 50S subunit and ribosome. Functionally, forms part of the polypeptide exit tunnel. In Bordetella pertussis (strain Tohama I / ATCC BAA-589 / NCTC 13251), this protein is Large ribosomal subunit protein uL4.